Here is a 256-residue protein sequence, read N- to C-terminus: MLNLYGREFSSRLMLGTAQYPSPAILRDAICKSGTEIITVSLRRESAGGKQGGQFWQFLQELDITILPNTAGCYTVKEAVTTAYLARDLFKTSWIKLEIIGNADTLQPNVFSLIEAAKILNSEGFHIFAYTTDDLIVAEKLLDVGCRVIMPWCAPIGSAKGPHHIDGLRSIRAYLPDVTLIVDAGIGRPSHAAVAMELGYDAVLLNTAVAKAGDPILMAEAFSKAIQAGRMGYKAGILEARNVAVPSTPVIGKAVF.

The active-site Schiff-base intermediate with DXP is the Lys96. Residues Gly157, 184-185 (AG), and 206-207 (NT) each bind 1-deoxy-D-xylulose 5-phosphate.

This sequence belongs to the ThiG family. Homotetramer. Forms heterodimers with either ThiH or ThiS.

Its subcellular location is the cytoplasm. The enzyme catalyses [ThiS sulfur-carrier protein]-C-terminal-Gly-aminoethanethioate + 2-iminoacetate + 1-deoxy-D-xylulose 5-phosphate = [ThiS sulfur-carrier protein]-C-terminal Gly-Gly + 2-[(2R,5Z)-2-carboxy-4-methylthiazol-5(2H)-ylidene]ethyl phosphate + 2 H2O + H(+). Its pathway is cofactor biosynthesis; thiamine diphosphate biosynthesis. Functionally, catalyzes the rearrangement of 1-deoxy-D-xylulose 5-phosphate (DXP) to produce the thiazole phosphate moiety of thiamine. Sulfur is provided by the thiocarboxylate moiety of the carrier protein ThiS. In vitro, sulfur can be provided by H(2)S. The polypeptide is Thiazole synthase (Bartonella tribocorum (strain CIP 105476 / IBS 506)).